The primary structure comprises 168 residues: Large ribosomal subunit protein uL16 (168 aa).

The protein belongs to the universal ribosomal protein uL16 family.

The polypeptide is Large ribosomal subunit protein uL16 (Thermofilum pendens (strain DSM 2475 / Hrk 5)).